An 820-amino-acid chain; its full sequence is Leucine--tRNA ligase (820 aa).

Residues 42-52 (PYPSGDLHMGH) carry the 'HIGH' region motif. The 'KMSKS' region signature appears at 576-580 (KMSKS). Lys-579 is an ATP binding site.

It belongs to the class-I aminoacyl-tRNA synthetase family.

The protein resides in the cytoplasm. It carries out the reaction tRNA(Leu) + L-leucine + ATP = L-leucyl-tRNA(Leu) + AMP + diphosphate. The polypeptide is Leucine--tRNA ligase (Coxiella burnetii (strain CbuG_Q212) (Coxiella burnetii (strain Q212))).